Consider the following 101-residue polypeptide: Small ribosomal subunit protein uS14 (101 aa).

It belongs to the universal ribosomal protein uS14 family. In terms of assembly, part of the 30S ribosomal subunit. Contacts proteins S3 and S10.

Its function is as follows. Binds 16S rRNA, required for the assembly of 30S particles and may also be responsible for determining the conformation of the 16S rRNA at the A site. The sequence is that of Small ribosomal subunit protein uS14 from Vibrio vulnificus (strain CMCP6).